We begin with the raw amino-acid sequence, 448 residues long: ATP-dependent protease ATPase subunit HslU (448 aa).

Residues Ile-18, 60–65 (GVGKTE), Asp-261, Glu-326, and Arg-398 each bind ATP.

This sequence belongs to the ClpX chaperone family. HslU subfamily. A double ring-shaped homohexamer of HslV is capped on each side by a ring-shaped HslU homohexamer. The assembly of the HslU/HslV complex is dependent on binding of ATP.

Its subcellular location is the cytoplasm. Its function is as follows. ATPase subunit of a proteasome-like degradation complex; this subunit has chaperone activity. The binding of ATP and its subsequent hydrolysis by HslU are essential for unfolding of protein substrates subsequently hydrolyzed by HslV. HslU recognizes the N-terminal part of its protein substrates and unfolds these before they are guided to HslV for hydrolysis. The polypeptide is ATP-dependent protease ATPase subunit HslU (Paraburkholderia xenovorans (strain LB400)).